Consider the following 352-residue polypeptide: tRNA pseudouridine synthase D (352 aa).

Aspartate 81 (nucleophile) is an active-site residue. The region spanning 157–303 (GVPNYFGGQR…MSHERRILRL (147 aa)) is the TRUD domain.

This sequence belongs to the pseudouridine synthase TruD family.

The catalysed reaction is uridine(13) in tRNA = pseudouridine(13) in tRNA. Its function is as follows. Responsible for synthesis of pseudouridine from uracil-13 in transfer RNAs. The protein is tRNA pseudouridine synthase D of Pseudomonas putida (strain W619).